We begin with the raw amino-acid sequence, 302 residues long: Putative T-box protein 34 (302 aa).

A DNA-binding region (T-box) is located at residues 5–180 (IVNEHKYREL…KMNLAPGSSQ (176 aa)).

Its subcellular location is the nucleus. This chain is Putative T-box protein 34 (tbx-34), found in Caenorhabditis elegans.